Here is a 451-residue protein sequence, read N- to C-terminus: Probable carboxypeptidase PMAA_093910 (451 aa).

Positions 1–19 are cleaved as a signal peptide; sequence MKVSSLLPSVLLLVGATRA. N149 carries an N-linked (GlcNAc...) asparagine glycan. Residue D171 coordinates Zn(2+). Residue E203 is the Proton acceptor of the active site. E204 serves as a coordination point for Zn(2+). Residue N354 is glycosylated (N-linked (GlcNAc...) asparagine).

The protein belongs to the peptidase M20A family. Requires Zn(2+) as cofactor.

The protein resides in the secreted. The polypeptide is Probable carboxypeptidase PMAA_093910 (Talaromyces marneffei (strain ATCC 18224 / CBS 334.59 / QM 7333) (Penicillium marneffei)).